The sequence spans 117 residues: MKLVRFLMKLTNETVSIELKNGTIVHGTITSVDMQMNTHLKAVKMTVKGREPVPVETLSIRGNNIRYYILPDSLPLDTLLIDDSTKPKQKKKEVVRGRGRGRGRGTRGRGRGASRGF.

Positions 2 to 74 (KLVRFLMKLT…IRYYILPDSL (73 aa)) constitute a Sm domain. Residues 81–117 (IDDSTKPKQKKKEVVRGRGRGRGRGTRGRGRGASRGF) are disordered. A compositionally biased stretch (basic residues) spans 87–117 (PKQKKKEVVRGRGRGRGRGTRGRGRGASRGF).

This sequence belongs to the snRNP core protein family. As to quaternary structure, belongs to the 40S cdc5-associated complex (or cwf complex), a spliceosome sub-complex reminiscent of a late-stage spliceosome composed of the U2, U5 and U6 snRNAs and at least brr2, cdc5, cwf2/prp3, cwf3/syf1, cwf4/syf3, cwf5/ecm2, spp42/cwf6, cwf7/spf27, cwf8, cwf9, cwf10, cwf11, cwf12, prp45/cwf13, cwf14, cwf15, cwf16, cwf17, cwf18, cwf19, cwf20, cwf21, cwf22, cwf23, cwf24, cwf25, cwf26, cyp7/cwf27, cwf28, cwf29/ist3, lea1, msl1, prp5/cwf1, prp10, prp12/sap130, prp17, prp22, sap61, sap62, sap114, sap145, slu7, smb1, smd1, smd3, smf1, smg1 and syf2. Interacts with saf5; the interaction is direct.

It localises to the nucleus. The protein localises to the cytoplasm. In terms of biological role, plays a role in pre-mRNA splicing as a core component of the spliceosomal U1, U2, U4 and U5 small nuclear ribonucleoproteins (snRNPs), the building blocks of the spliceosome. The protein is Small nuclear ribonucleoprotein Sm D1 (smd1) of Schizosaccharomyces pombe (strain 972 / ATCC 24843) (Fission yeast).